Here is a 289-residue protein sequence, read N- to C-terminus: Cbb3-type cytochrome c oxidase subunit FixP (289 aa).

Topologically, residues 1-33 (MADKHKHVDEVSGVETTGHEWDGIRELNNPLPR) are cytoplasmic. The helical transmembrane segment at 34 to 56 (WWVYSFYATIIWAIGYAVAYPSW) threads the bilayer. The Periplasmic segment spans residues 57–289 (PMLTEATKGV…VFVHSLGGGE (233 aa)). 2 consecutive Cytochrome c domains span residues 110–198 (FAVS…MSLT) and 205–286 (HLVE…HSLG). Positions 123, 126, 127, 175, 218, 221, 222, and 263 each coordinate heme c.

This sequence belongs to the CcoP / FixP family. As to quaternary structure, component of the cbb3-type cytochrome c oxidase at least composed of FixN, FixO, FixQ and FixP. Requires heme c as cofactor.

Its subcellular location is the cell inner membrane. The protein operates within energy metabolism; oxidative phosphorylation. C-type cytochrome. Part of the cbb3-type cytochrome c oxidase complex. FixP subunit is required for transferring electrons from donor cytochrome c via its heme groups to FixO subunit. From there, electrons are shuttled to the catalytic binuclear center of FixN subunit where oxygen reduction takes place. The complex also functions as a proton pump. This is Cbb3-type cytochrome c oxidase subunit FixP from Sinorhizobium medicae (strain WSM419) (Ensifer medicae).